The chain runs to 479 residues: Glutamate--tRNA ligase (479 aa).

The 'HIGH' region motif lies at Pro-9 to Thr-19. The short motif at Lys-248–Arg-252 is the 'KMSKS' region element. Lys-251 is a binding site for ATP.

The protein belongs to the class-I aminoacyl-tRNA synthetase family. Glutamate--tRNA ligase type 1 subfamily. In terms of assembly, monomer.

Its subcellular location is the cytoplasm. It carries out the reaction tRNA(Glu) + L-glutamate + ATP = L-glutamyl-tRNA(Glu) + AMP + diphosphate. Catalyzes the attachment of glutamate to tRNA(Glu) in a two-step reaction: glutamate is first activated by ATP to form Glu-AMP and then transferred to the acceptor end of tRNA(Glu). The protein is Glutamate--tRNA ligase of Prochlorococcus marinus (strain MIT 9312).